A 281-amino-acid polypeptide reads, in one-letter code: MLIVTGMSGAGKSVALHTLEDLGYYCVDNLPLILLDAFVRDFAQHHAQPVAVAIDARNAQDISALSDKLQTMKSVTRIQILFLNAQTNVLARRFSESRRPHPLRNFGSEQIIEAIEKERKLLGSLNNIADMLIDTSNYRAADLRQQLMQLLNTTAPHLLITLQSFGFKHGIPVNADFVFDVRFLPNPYWEARLRAFNGKEQPIIDWLEQFAEPRQFAQETAHYLQHWLSYFTGQNNRAYLNIAIGCTGGQHRSVFIAESVGAILRQDFPDLHIEHRDIEKN.

6–13 (GMSGAGKS) contributes to the ATP binding site. Position 55 to 58 (55 to 58 (DARN)) interacts with GTP.

Belongs to the RapZ-like family.

Displays ATPase and GTPase activities. The sequence is that of Nucleotide-binding protein DNO_0399 from Dichelobacter nodosus (strain VCS1703A).